We begin with the raw amino-acid sequence, 197 residues long: Holliday junction branch migration complex subunit RuvA (197 aa).

Residues M1–V63 are domain I. Residues N64–L142 form a domain II region. A flexible linker region spans residues L142 to P146. Positions A147–K197 are domain III.

The protein belongs to the RuvA family. Homotetramer. Forms an RuvA(8)-RuvB(12)-Holliday junction (HJ) complex. HJ DNA is sandwiched between 2 RuvA tetramers; dsDNA enters through RuvA and exits via RuvB. An RuvB hexamer assembles on each DNA strand where it exits the tetramer. Each RuvB hexamer is contacted by two RuvA subunits (via domain III) on 2 adjacent RuvB subunits; this complex drives branch migration. In the full resolvosome a probable DNA-RuvA(4)-RuvB(12)-RuvC(2) complex forms which resolves the HJ.

The protein resides in the cytoplasm. The RuvA-RuvB-RuvC complex processes Holliday junction (HJ) DNA during genetic recombination and DNA repair, while the RuvA-RuvB complex plays an important role in the rescue of blocked DNA replication forks via replication fork reversal (RFR). RuvA specifically binds to HJ cruciform DNA, conferring on it an open structure. The RuvB hexamer acts as an ATP-dependent pump, pulling dsDNA into and through the RuvAB complex. HJ branch migration allows RuvC to scan DNA until it finds its consensus sequence, where it cleaves and resolves the cruciform DNA. This Lactococcus lactis subsp. cremoris (strain SK11) protein is Holliday junction branch migration complex subunit RuvA.